The sequence spans 765 residues: Endothelin-converting enzyme 2 (765 aa).

At 1–60 (MSVALQELGGGGNMVEYKRATLRDEDAPETPVEGGASPDAVEAGFRKRTSRLLGLHTQLE) the chain is on the cytoplasmic side. Residues 61–81 (LVLAGVSLLLAALLLGCLVAL) form a helical; Signal-anchor for type II membrane protein membrane-spanning segment. At 82 to 765 (GVQYHRDPSH…MNSGQLCEVW (684 aa)) the chain is on the lumenal side. Residues 93–765 (TCLTEACIRV…MNSGQLCEVW (673 aa)) form the Peptidase M13 domain. 5 disulfides stabilise this stretch: Cys94-Cys99, Cys117-Cys750, Cys125-Cys710, Cys181-Cys430, and Cys639-Cys762. Asn161, Asn165, Asn206, Asn266, Asn311, Asn378, and Asn534 each carry an N-linked (GlcNAc...) asparagine glycan. His602 provides a ligand contact to Zn(2+). Glu603 is a catalytic residue. His606 provides a ligand contact to Zn(2+). N-linked (GlcNAc...) asparagine glycans are attached at residues Asn627 and Asn635. Residue Glu662 coordinates Zn(2+). The active-site Proton donor is Asp666.

The protein belongs to the peptidase M13 family. Zn(2+) serves as cofactor. In terms of tissue distribution, isoform ECE2-1 and isoform ECE2-2 are expressed in brain and adrenal gland.

The protein resides in the golgi apparatus membrane. Its subcellular location is the cytoplasmic vesicle. The protein localises to the secretory vesicle membrane. The enzyme catalyses Hydrolysis of the 21-Trp-|-Val-22 bond in big endothelin to form endothelin 1.. Its function is as follows. Converts big endothelin-1 to endothelin-1. Also involved in the processing of various neuroendocrine peptides, including neurotensin, angiotensin I, substance P, proenkephalin-derived peptides, and prodynorphin-derived peptides. May play a role in amyloid-beta processing. This is Endothelin-converting enzyme 2 from Bos taurus (Bovine).